The chain runs to 385 residues: MNVFWFIPTHGDSRYLGTSQGARAADYDYFRQIAVAADTLGYEGVLLPTGRSCEDAWVVASSLIPATQRLKFLVAIRPGIASPGLSARMAATFDRLSGGRLLINVVTGGDAAELEGDGLFVDHDTRYEITDEFLRIWRGLLTSAHHGESVEFIGRHLKSKGGKLLYPPVQSPHPPLWFGGSSPAAHEMAGEHIDTYLTWGEPPEAVAEKIADIRARAAQHGRTIRFGIRLHVIVRETEDEAWAAADKLISKLDDDTVARAQEAFAKMDSEGQRRMAALHGGKRGSRKELEIYPNLWAGVGLVRGGAGTALVGNAEQVAARMREYAELGIETFILSGYPHLEESYRFAELVFPLLPGRQRANANGPLSGPFGEIVGNHYAPKASQS.

This sequence belongs to the SsuD family.

The catalysed reaction is an alkanesulfonate + FMNH2 + O2 = an aldehyde + FMN + sulfite + H2O + 2 H(+). In terms of biological role, catalyzes the desulfonation of aliphatic sulfonates. The sequence is that of Alkanesulfonate monooxygenase from Paraburkholderia phymatum (strain DSM 17167 / CIP 108236 / LMG 21445 / STM815) (Burkholderia phymatum).